Here is a 398-residue protein sequence, read N- to C-terminus: S-adenosylmethionine synthase (398 aa).

136-141 is an ATP binding site; it reads GTGSSD.

The protein belongs to the AdoMet synthase 2 family. Requires Mg(2+) as cofactor.

It catalyses the reaction L-methionine + ATP + H2O = S-adenosyl-L-methionine + phosphate + diphosphate. It participates in amino-acid biosynthesis; S-adenosyl-L-methionine biosynthesis; S-adenosyl-L-methionine from L-methionine: step 1/1. Its function is as follows. Catalyzes the formation of S-adenosylmethionine from methionine and ATP. The sequence is that of S-adenosylmethionine synthase from Methanosarcina acetivorans (strain ATCC 35395 / DSM 2834 / JCM 12185 / C2A).